Here is a 201-residue protein sequence, read N- to C-terminus: Recombination protein RecR (201 aa).

The C4-type zinc-finger motif lies at 57-72 (CADCRTFTEQDVCNIC). A Toprim domain is found at 81-176 (GQICVVESPA…EASRIAHGVP (96 aa)).

It belongs to the RecR family.

In terms of biological role, may play a role in DNA repair. It seems to be involved in an RecBC-independent recombinational process of DNA repair. It may act with RecF and RecO. In Salmonella agona (strain SL483), this protein is Recombination protein RecR.